We begin with the raw amino-acid sequence, 165 residues long: Large ribosomal subunit protein uL10 (165 aa).

This sequence belongs to the universal ribosomal protein uL10 family. In terms of assembly, part of the ribosomal stalk of the 50S ribosomal subunit. The N-terminus interacts with L11 and the large rRNA to form the base of the stalk. The C-terminus forms an elongated spine to which L12 dimers bind in a sequential fashion forming a multimeric L10(L12)X complex.

In terms of biological role, forms part of the ribosomal stalk, playing a central role in the interaction of the ribosome with GTP-bound translation factors. The polypeptide is Large ribosomal subunit protein uL10 (Burkholderia thailandensis (strain ATCC 700388 / DSM 13276 / CCUG 48851 / CIP 106301 / E264)).